A 478-amino-acid chain; its full sequence is UDP-N-acetylmuramate--L-alanine ligase (478 aa).

112 to 118 (GTHGKTT) lines the ATP pocket.

The protein belongs to the MurCDEF family.

It is found in the cytoplasm. It catalyses the reaction UDP-N-acetyl-alpha-D-muramate + L-alanine + ATP = UDP-N-acetyl-alpha-D-muramoyl-L-alanine + ADP + phosphate + H(+). It functions in the pathway cell wall biogenesis; peptidoglycan biosynthesis. Cell wall formation. The polypeptide is UDP-N-acetylmuramate--L-alanine ligase (Polynucleobacter asymbioticus (strain DSM 18221 / CIP 109841 / QLW-P1DMWA-1) (Polynucleobacter necessarius subsp. asymbioticus)).